The following is a 207-amino-acid chain: Guanylate kinase (207 aa).

Positions 5–184 (GNLFIVSAPS…ALADLSAIIR (180 aa)) constitute a Guanylate kinase-like domain. 12–19 (APSGAGKS) provides a ligand contact to ATP. Residues 30–49 (PSDKQVSVSHTTRKPRPGEV) are disordered.

The protein belongs to the guanylate kinase family.

Its subcellular location is the cytoplasm. The catalysed reaction is GMP + ATP = GDP + ADP. Its function is as follows. Essential for recycling GMP and indirectly, cGMP. The sequence is that of Guanylate kinase from Shewanella frigidimarina (strain NCIMB 400).